A 149-amino-acid chain; its full sequence is Probable ubiquitin-conjugating enzyme E2 W (149 aa).

The region spanning 4–149 is the UBC core domain; sequence RYAKRLQKEL…VRWMFHDDTV (146 aa). The Glycyl thioester intermediate role is filled by C88.

It belongs to the ubiquitin-conjugating enzyme family.

The enzyme catalyses S-ubiquitinyl-[E1 ubiquitin-activating enzyme]-L-cysteine + [E2 ubiquitin-conjugating enzyme]-L-cysteine = [E1 ubiquitin-activating enzyme]-L-cysteine + S-ubiquitinyl-[E2 ubiquitin-conjugating enzyme]-L-cysteine.. It carries out the reaction S-ubiquitinyl-[E1 ubiquitin-activating enzyme]-L-cysteine + [acceptor protein]-N-terminal-amino acid = [E1 ubiquitin-activating enzyme]-L-cysteine + N-terminal-ubiquitinyl-[acceptor protein].. Its pathway is protein modification; protein ubiquitination. Functionally, catalyzes the covalent attachment of ubiquitin to other proteins. This chain is Probable ubiquitin-conjugating enzyme E2 W (ube2w), found in Dictyostelium discoideum (Social amoeba).